Reading from the N-terminus, the 315-residue chain is Aspartate carbamoyltransferase catalytic subunit (315 aa).

Carbamoyl phosphate is bound by residues R64 and T65. K92 contacts L-aspartate. Residues R114, H142, and Q145 each coordinate carbamoyl phosphate. L-aspartate is bound by residues R175 and R229. The carbamoyl phosphate site is built by G270 and P271.

This sequence belongs to the aspartate/ornithine carbamoyltransferase superfamily. ATCase family. Heterododecamer (2C3:3R2) of six catalytic PyrB chains organized as two trimers (C3), and six regulatory PyrI chains organized as three dimers (R2).

The enzyme catalyses carbamoyl phosphate + L-aspartate = N-carbamoyl-L-aspartate + phosphate + H(+). Its pathway is pyrimidine metabolism; UMP biosynthesis via de novo pathway; (S)-dihydroorotate from bicarbonate: step 2/3. In terms of biological role, catalyzes the condensation of carbamoyl phosphate and aspartate to form carbamoyl aspartate and inorganic phosphate, the committed step in the de novo pyrimidine nucleotide biosynthesis pathway. The protein is Aspartate carbamoyltransferase catalytic subunit of Methylorubrum extorquens (strain CM4 / NCIMB 13688) (Methylobacterium extorquens).